The sequence spans 535 residues: CTP synthase (535 aa).

The tract at residues 1 to 267 is amidoligase domain; sequence MTKYIFVTGG…DQIVCDHLKL (267 aa). Serine 13 serves as a coordination point for CTP. A UTP-binding site is contributed by serine 13. An ATP-binding site is contributed by 14–19; the sequence is SLGKGI. An L-glutamine-binding site is contributed by tyrosine 54. Aspartate 71 lines the ATP pocket. Positions 71 and 141 each coordinate Mg(2+). CTP-binding positions include 148-150, 188-193, and lysine 224; these read DIE and KTKPTQ. UTP is bound by residues 188-193 and lysine 224; that span reads KTKPTQ. Residue 240–242 coordinates ATP; the sequence is RDA. The 243-residue stretch at 292-534 folds into the Glutamine amidotransferase type-1 domain; that stretch reads KIALVGKYVE…VSASITNKES (243 aa). Glycine 354 provides a ligand contact to L-glutamine. Catalysis depends on cysteine 381, which acts as the Nucleophile; for glutamine hydrolysis. Residues 382 to 385, glutamate 405, and arginine 462 contribute to the L-glutamine site; that span reads LGMQ. Residues histidine 507 and glutamate 509 contribute to the active site.

It belongs to the CTP synthase family. As to quaternary structure, homotetramer.

The enzyme catalyses UTP + L-glutamine + ATP + H2O = CTP + L-glutamate + ADP + phosphate + 2 H(+). The catalysed reaction is L-glutamine + H2O = L-glutamate + NH4(+). It carries out the reaction UTP + NH4(+) + ATP = CTP + ADP + phosphate + 2 H(+). Its pathway is pyrimidine metabolism; CTP biosynthesis via de novo pathway; CTP from UDP: step 2/2. Its activity is regulated as follows. Allosterically activated by GTP, when glutamine is the substrate; GTP has no effect on the reaction when ammonia is the substrate. The allosteric effector GTP functions by stabilizing the protein conformation that binds the tetrahedral intermediate(s) formed during glutamine hydrolysis. Inhibited by the product CTP, via allosteric rather than competitive inhibition. Functionally, catalyzes the ATP-dependent amination of UTP to CTP with either L-glutamine or ammonia as the source of nitrogen. Regulates intracellular CTP levels through interactions with the four ribonucleotide triphosphates. The polypeptide is CTP synthase (Bacillus mycoides (strain KBAB4) (Bacillus weihenstephanensis)).